The sequence spans 534 residues: MTKYIFVTGGVVSSIGKGIVAASLGRLLKNRGLKVTIQKFDPYINIDPGTMSPYQHGEVYVTDDGAETDLDLGHYERFIDINLNKYSNVTTGKIYSEVLKKERRGEYLGATVQVIPHVTDALKEKIKRAATTTDSDVIITEVGGTVGDIESLPFLEALRQMKADVGSDNVMYIHTTLLPYLKAAGEMKTKPTQHSVKELRGLGIQPNMLVIRTEQPAGQSIKNKLAQFCDVAPEAVIESLDVDHIYQIPLNMQAQNMDQIVCDHLKLETPAADMTEWSAMVDKVMNLEKKVKIALVGKYVELPDAYLSVVEALKHSGYVNDVAIDLKWVNAAEVTEDNIKELVGDADGIIVPGGFGQRGSEGKIEAIRYARENDVPMLGVCLGMQLTCVEFARNVLKLHGANSAELDPKTPFPIIDIMRDQIDIEDMGGTLRLGLYPCKLKAGSRAAAAYNNQEVVQRRHRHRYEFNTKFREQFEAAGFVFSGVSPDNRLMEVVELPEKKFFVAAQYHPELQSRPNHAEELYTAFVTAAVENMK.

Residues 1 to 267 (MTKYIFVTGG…DQIVCDHLKL (267 aa)) form an amidoligase domain region. Residue serine 13 coordinates CTP. Serine 13 is a binding site for UTP. 14–19 (SIGKGI) provides a ligand contact to ATP. Tyrosine 54 serves as a coordination point for L-glutamine. Aspartate 71 serves as a coordination point for ATP. Mg(2+)-binding residues include aspartate 71 and glutamate 141. CTP contacts are provided by residues 148 to 150 (DIE), 188 to 193 (KTKPTQ), and lysine 224. Residues 188 to 193 (KTKPTQ) and lysine 224 contribute to the UTP site. Positions 292-534 (KIALVGKYVE…FVTAAVENMK (243 aa)) constitute a Glutamine amidotransferase type-1 domain. Glycine 354 provides a ligand contact to L-glutamine. Cysteine 381 acts as the Nucleophile; for glutamine hydrolysis in catalysis. Residues 382 to 385 (LGMQ), glutamate 405, and arginine 463 each bind L-glutamine. Active-site residues include histidine 508 and glutamate 510.

It belongs to the CTP synthase family. In terms of assembly, homotetramer.

It catalyses the reaction UTP + L-glutamine + ATP + H2O = CTP + L-glutamate + ADP + phosphate + 2 H(+). The catalysed reaction is L-glutamine + H2O = L-glutamate + NH4(+). The enzyme catalyses UTP + NH4(+) + ATP = CTP + ADP + phosphate + 2 H(+). It functions in the pathway pyrimidine metabolism; CTP biosynthesis via de novo pathway; CTP from UDP: step 2/2. Its activity is regulated as follows. Allosterically activated by GTP, when glutamine is the substrate; GTP has no effect on the reaction when ammonia is the substrate. The allosteric effector GTP functions by stabilizing the protein conformation that binds the tetrahedral intermediate(s) formed during glutamine hydrolysis. Inhibited by the product CTP, via allosteric rather than competitive inhibition. Catalyzes the ATP-dependent amination of UTP to CTP with either L-glutamine or ammonia as the source of nitrogen. Regulates intracellular CTP levels through interactions with the four ribonucleotide triphosphates. This chain is CTP synthase, found in Streptococcus agalactiae serotype Ia (strain ATCC 27591 / A909 / CDC SS700).